A 314-amino-acid polypeptide reads, in one-letter code: Mitotic checkpoint protein BUB3.3 (314 aa).

WD repeat units follow at residues 11–50 (PIED…LSLE), 52–90 (NSQA…VDTI), 92–131 (RHDD…SLVF), 134–173 (DAGG…QSYA), 176–215 (VEVP…SEIK), 229–269 (LDGV…RLNE), and 272–311 (RYSN…QVFI).

The protein belongs to the WD repeat BUB3 family. Part of the mitotic checkpoint complex (MCC).

The protein resides in the nucleus. The protein localises to the chromosome. It is found in the centromere. Its subcellular location is the kinetochore. It localises to the cytoplasm. The protein resides in the cytoskeleton. The protein localises to the phragmoplast. It is found in the spindle. Its function is as follows. Has a dual function in spindle-assembly checkpoint signaling and in promoting the establishment of correct kinetochore-microtubule (K-MT) attachments. Promotes the formation of stable end-on bipolar attachments. Necessary for kinetochore localization of BUB1. The BUB1/BUB3 complex plays a role in the inhibition of anaphase-promoting complex or cyclosome (APC/C) when spindle-assembly checkpoint is activated and inhibits the ubiquitin ligase activity of APC/C by phosphorylating its activator CDC20. In Arabidopsis thaliana (Mouse-ear cress), this protein is Mitotic checkpoint protein BUB3.3 (BUB3.3).